The sequence spans 125 residues: UPF0734 protein DDB_G0273871/DDB_G0273177 (125 aa).

This sequence belongs to the UPF0734 family.

In Dictyostelium discoideum (Social amoeba), this protein is UPF0734 protein DDB_G0273871/DDB_G0273177.